The sequence spans 1123 residues: MTKSTKLRHCKQKKKKPEKTPKGNPPILITEKSIEDAATTTSTTDALLGSPEGSRSKSRKLKLCCCTAQAATLSPLDPTSYGGIASTSAHNGMVGGLSRDSRAASRTSKRGSSKSLNRPQIDADEPSTSGTNPDRRPSTHFVLDLPVVSTRLRKLSEAFFNAQHGDKIDLMNDWEIGGTQNKWVCPSDRHLHLRAQLKSGWSVRTATARSPTNSKAQTGSITAAEQEHIQKVLAKAEESKSKEQQRIGKMVDRLEKMRRRATGNGVTHCLLCHTEFGLLASKSYAAMCVDCRKYVCQRNCGVETTDVNQTTGKVETVFLCKICSEAREVLWKKSGAWFYKEMPEFQRPDDRLPYYVPVTTNGTLPNASSAATPLSGTPGGAGPQPMTMPSTSSCQMTTPKWASPGVCNSPGLQMNGGPTSPLPNGTRRNTGHGGIEFPSSSRPSICSVLQAIEPLDRSKSPRPRIQPRWVNEKVMSSMSVDDEEKAASSSDGESFVQSGVPRRALNNKTPVGSTSATTSPAPPPTSTTPTSRREANMERFSRHTHAHANRLYSTDDDDDSSPESRPSTRSTSPRHSLATPSSYAHDTCHDTSLPDADTRSIDSGVVQSDHSNPQQSGLTCSSSSLTPLQQQASHDHHSGGGTPRRISNPDRTTSRVAQSASGTSLVTPPPPISSRTSPDNCNSSPLNVMEHKSSSASTASSGGNRRVGSAEPVLNNHHAMHNNQNHNDINKKLISQTSRAESPLAASSSFLSSPDDDTKQKNRRRDGVGRVNSLQLRTSLDDVAPPVAPISKMNGHIVSSEPTSSTTSNQNHTSVPIPTVPVVPEEEEEKAITASTESASEPGSLGSITLTLTYHSADKKLKMHLIRAKNLKAMDSNGFSDPYVKFHLLPGNTKATKLTSKTIEKTLNPEWNEEMSYYGITEDDKEKKILRVTVLDRDRIGSDFLGETRIALKKLNDNEMKKFNLYLESALPVPQQTKEEENEDRGKINVGLQYNIQQGSLFININRCVELVGMDSTGFSDPYCKVSLTPITSKAHRAKTSTKKRTLNPEWNEQLQFVVPFKDLPKKTLQIGVYDHDLGKHDDYIGGILLSTSAKDERGRQWIKCIENPGTLVEAWHRLELDS.

Positions 1–17 are enriched in basic residues; sequence MTKSTKLRHCKQKKKKP. Disordered regions lie at residues 1-56 and 88-140; these read MTKS…GSRS and SAHN…PSTH. Positions 36-46 are enriched in low complexity; it reads DAATTTSTTDA. Residues 215–341 enclose the RabBD domain; sequence KAQTGSITAA…KKSGAWFYKE (127 aa). The segment at 263–328 adopts an FYVE-type zinc-finger fold; it reads GNGVTHCLLC…LCKICSEARE (66 aa). Zn(2+)-binding residues include Cys269, Cys272, Cys288, Cys291, Cys296, Cys300, Cys320, and Cys323. 4 stretches are compositionally biased toward polar residues: residues 365–375, 387–400, 410–428, and 487–497; these read PNASSAATPLS, TMPS…TTPK, PGLQ…GTRR, and ASSSDGESFVQ. Disordered regions lie at residues 365–710, 737–779, and 796–818; these read PNAS…VGSA, TSRA…LRTS, and HIVS…VPIP. Over residues 531 to 541 the composition is skewed to basic and acidic residues; sequence SRREANMERFS. Positions 563–574 are enriched in low complexity; sequence ESRPSTRSTSPR. Polar residues-rich tracts occupy residues 605-632 and 649-666; these read VVQS…QQQA and PDRT…TSLV. Residues 742–753 show a composition bias toward low complexity; that stretch reads SPLAASSSFLSS. The segment covering 756–768 has biased composition (basic and acidic residues); the sequence is DDTKQKNRRRDGV. Positions 803–818 are enriched in low complexity; sequence TSSTTSNQNHTSVPIP. C2 domains lie at 844–967 and 984–1103; these read SLGS…NLYL and DRGK…RQWI. Asp875, Asp881, Asp936, Asp938, Asp943, Asp1015, Asp1021, Asp1075, Asp1077, and Asp1083 together coordinate Ca(2+).

Ca(2+) serves as cofactor.

It is found in the synapse. Rab-3 effector. The sequence is that of Rabphilin-1 (rbf-1) from Caenorhabditis elegans.